The chain runs to 114 residues: Neurotrophic factor BDNF precursor form (114 aa).

Cystine bridges form between cysteine 14/cysteine 81, cysteine 59/cysteine 110, and cysteine 69/cysteine 112.

Belongs to the NGF-beta family. As to quaternary structure, monomers and homodimers. Binds to NTRK2/TRKB. Can form heterodimers with other neurotrophin family members, such as NTF3 and NTF4 (in vitro), but the physiological relevance of this is not clear. BDNF precursor form: interacts with the heterodimer formed by NGFR and SORCS2. Mature BDNF has much lower affinity for the heterodimer formed by NGFR and SORCS2. N-glycosylated and glycosulfated, contrary to mature BDNF. In terms of processing, mature BDNF is produced by proteolytic removal of the propeptide, catalyzed by a FURIN family member. In addition, the precursor form is proteolytically cleaved within the propeptide, but this is not an obligatory intermediate for the production of mature BDNF. Can be converted into mature BDNF by plasmin (PLG).

The protein localises to the secreted. Functionally, important signaling molecule that activates signaling cascades downstream of NTRK2. During development, promotes the survival and differentiation of selected neuronal populations of the peripheral and central nervous systems. Participates in axonal growth, pathfinding and in the modulation of dendritic growth and morphology. Major regulator of synaptic transmission and plasticity at adult synapses in many regions of the CNS. The versatility of BDNF is emphasized by its contribution to a range of adaptive neuronal responses including long-term potentiation (LTP), long-term depression (LTD), certain forms of short-term synaptic plasticity, as well as homeostatic regulation of intrinsic neuronal excitability. Its function is as follows. Important signaling molecule that activates signaling cascades downstream of NTRK2. Activates signaling cascades via the heterodimeric receptor formed by NGFR and SORCS2. Signaling via NGFR and SORCS2 plays a role in synaptic plasticity and long-term depression (LTD). Binding to NGFR and SORCS2 promotes neuronal apoptosis. Promotes neuronal growth cone collapse. This chain is Neurotrophic factor BDNF precursor form (BDNF), found in Macaca mulatta (Rhesus macaque).